The sequence spans 208 residues: Small ribosomal subunit protein uS4 (208 aa).

An S4 RNA-binding domain is found at 98–161 (QRLDNVVFRM…KSNPQVVRAL (64 aa)).

Belongs to the universal ribosomal protein uS4 family. As to quaternary structure, part of the 30S ribosomal subunit. Contacts protein S5. The interaction surface between S4 and S5 is involved in control of translational fidelity.

One of the primary rRNA binding proteins, it binds directly to 16S rRNA where it nucleates assembly of the body of the 30S subunit. Its function is as follows. With S5 and S12 plays an important role in translational accuracy. The polypeptide is Small ribosomal subunit protein uS4 (Aliarcobacter butzleri (strain RM4018) (Arcobacter butzleri)).